Here is a 104-residue protein sequence, read N- to C-terminus: uncharacterized protein (104 aa).

This is an uncharacterized protein from Invertebrate iridescent virus 3 (IIV-3).